Reading from the N-terminus, the 306-residue chain is Methionyl-tRNA formyltransferase (306 aa).

(6S)-5,6,7,8-tetrahydrofolate is bound at residue 109–112 (SILP).

This sequence belongs to the Fmt family.

The enzyme catalyses L-methionyl-tRNA(fMet) + (6R)-10-formyltetrahydrofolate = N-formyl-L-methionyl-tRNA(fMet) + (6S)-5,6,7,8-tetrahydrofolate + H(+). In terms of biological role, attaches a formyl group to the free amino group of methionyl-tRNA(fMet). The formyl group appears to play a dual role in the initiator identity of N-formylmethionyl-tRNA by promoting its recognition by IF2 and preventing the misappropriation of this tRNA by the elongation apparatus. This chain is Methionyl-tRNA formyltransferase, found in Herpetosiphon aurantiacus (strain ATCC 23779 / DSM 785 / 114-95).